A 1073-amino-acid chain; its full sequence is Ubiquitin carboxyl-terminal hydrolase 53 (1073 aa).

Positions 30 to 351 (KGLLNEPGQN…QPLLLFYANP (322 aa)) constitute a USP domain. The Nucleophile role is filled by C41. Positions 66, 68, 73, 76, 132, 144, 149, 152, 165, 168, 224, and 228 each coordinate Zn(2+). H301 functions as the Proton acceptor in the catalytic mechanism. 2 disordered regions span residues 391–437 (LKEN…HIDQ) and 485–636 (LSHF…PKQK). Over residues 407–418 (KFPTDNISSSNR) the composition is skewed to polar residues. Low complexity predominate over residues 524–541 (QSRASAQIISSSKSQILA). A compositionally biased stretch (polar residues) spans 553–563 (DNGTGYDTDSS). Positions 612–627 (NISNKPKSSKDPSFSN) are enriched in low complexity.

The protein belongs to the peptidase C19 family. In terms of assembly, interacts (via the C-terminal region) with the heterodimer TJP1:TJP2. As to expression, expressed predominantly in skeletal muscle and heart.

It is found in the cell junction. Its subcellular location is the tight junction. The catalysed reaction is Thiol-dependent hydrolysis of ester, thioester, amide, peptide and isopeptide bonds formed by the C-terminal Gly of ubiquitin (a 76-residue protein attached to proteins as an intracellular targeting signal).. Its function is as follows. Deubiquitinase that mediates 'Lys-63'-linked deubiquitination of tight junction proteins, such as MARVELD2 and LSR, and which is involved in the survival of auditory hair cells and hearing. Specifically cleaves 'Lys-63'-linked polyubiquitin chains composed of at least 3 ubiquitin molecules, while it is not able to deubiquitinate substrates with shorter ubiquitin chains: recognizes ubiquitin chain in position S2 and catalyzes en bloc cleavage of polyubiquitin chains from substrate proteins. Probably acts by modulating the barrier properties and mechanical stability of tight junctions via deubiquitination of MARVELD2 and LSR. This chain is Ubiquitin carboxyl-terminal hydrolase 53, found in Homo sapiens (Human).